The sequence spans 156 residues: Small ribosomal subunit protein uS7 (156 aa).

It belongs to the universal ribosomal protein uS7 family. In terms of assembly, part of the 30S ribosomal subunit. Contacts proteins S9 and S11.

One of the primary rRNA binding proteins, it binds directly to 16S rRNA where it nucleates assembly of the head domain of the 30S subunit. Is located at the subunit interface close to the decoding center, probably blocks exit of the E-site tRNA. The sequence is that of Small ribosomal subunit protein uS7 from Nitrosospira multiformis (strain ATCC 25196 / NCIMB 11849 / C 71).